Here is a 142-residue protein sequence, read N- to C-terminus: UPF0102 protein Synpcc7942_0312 (142 aa).

It belongs to the UPF0102 family.

The polypeptide is UPF0102 protein Synpcc7942_0312 (Synechococcus elongatus (strain ATCC 33912 / PCC 7942 / FACHB-805) (Anacystis nidulans R2)).